We begin with the raw amino-acid sequence, 473 residues long: MKTLYSLRRFYPVETLFNGTLALAGRDQETTGFAWWAGNARLINLSGKLLGAHVAHAGLIVFWAGAMNLFEVAHFVPEKPMYEQGLILLPHLATLGWGVGPGGEVIDTFPYFVSGVLHLISSAVLGFGGIYHALLGPETLEESFPFFGYVWKDRNKMTTILGIHLILLGIGAFLLVFKALYFGGVYDTWAPGGGDVRKITNLTLSPSVIFGYLLKSPFGGEGWIVSVDDLEDIIGGHVWLGSICIFGGIWHILTKPFAWARRALVWSGEAYLSYSLGALAVFGFIACCFVWFNNTAYPSEFYGPTGPEASQAQAFTFLVRDQRLGANVGSAQGPTGLGKYLMRSPTGEVIFGGETMRFWDLRAPWLEPLRGPNGLDLSRLKKDIQPWQERRSAEYMTHAPLGSLNSVGGVATEINAVNYVSPRSWLATSHFVLGFFLFVGHLWHAGRARAAAAGFEKGIDRDFEPVLSMTPLN.

Residues 1-14 (MKTLYSLRRFYPVE) constitute a propeptide that is removed on maturation. N-acetylthreonine is present on Thr-15. Residue Thr-15 is modified to Phosphothreonine. 5 helical membrane passes run 69–93 (LFEV…PHLA), 134–155 (LLGP…KDRN), 178–200 (KALY…RKIT), 255–275 (KPFA…LSYS), and 291–312 (WFNN…ASQA). [CaMn4O5] cluster is bound at residue Glu-367. The chain crosses the membrane as a helical span at residues 447–471 (RARAAAAGFEKGIDRDFEPVLSMTP).

It belongs to the PsbB/PsbC family. PsbC subfamily. As to quaternary structure, PSII is composed of 1 copy each of membrane proteins PsbA, PsbB, PsbC, PsbD, PsbE, PsbF, PsbH, PsbI, PsbJ, PsbK, PsbL, PsbM, PsbT, PsbX, PsbY, PsbZ, Psb30/Ycf12, at least 3 peripheral proteins of the oxygen-evolving complex and a large number of cofactors. It forms dimeric complexes. Requires Binds multiple chlorophylls and provides some of the ligands for the Ca-4Mn-5O cluster of the oxygen-evolving complex. It may also provide a ligand for a Cl- that is required for oxygen evolution. PSII binds additional chlorophylls, carotenoids and specific lipids. as cofactor.

It localises to the plastid. Its subcellular location is the chloroplast thylakoid membrane. Functionally, one of the components of the core complex of photosystem II (PSII). It binds chlorophyll and helps catalyze the primary light-induced photochemical processes of PSII. PSII is a light-driven water:plastoquinone oxidoreductase, using light energy to abstract electrons from H(2)O, generating O(2) and a proton gradient subsequently used for ATP formation. This chain is Photosystem II CP43 reaction center protein, found in Vitis vinifera (Grape).